The chain runs to 200 residues: Blue fluorescence protein (200 aa).

2 Lumazine-binding repeats span residues 1 to 111 (MFKG…TGGR) and 112 to 200 (SLSG…AGNW).

As to quaternary structure, monomer.

The protein localises to the cytoplasm. Functionally, blue fluorescence protein (BFP) that can bind 6,7-dimethyl-8-ribityllumazine, riboflavin, and 6-methyl-7-oxo-8-ribityllumazine as a bound fluorophore. Has no riboflavin-synthase activity. The sequence is that of Blue fluorescence protein from Aliivibrio fischeri (Vibrio fischeri).